The sequence spans 157 residues: Large ribosomal subunit protein mL59 (157 aa).

It belongs to the mitochondrion-specific ribosomal protein mL59 family. In terms of assembly, component of the mitochondrial large ribosomal subunit (mt-LSU). Mature yeast 74S mitochondrial ribosomes consist of a small (37S) and a large (54S) subunit. The 37S small subunit contains a 15S ribosomal RNA (15S mt-rRNA) and 34 different proteins. The 54S large subunit contains a 21S rRNA (21S mt-rRNA) and 46 different proteins.

It localises to the mitochondrion. Its function is as follows. Component of the mitochondrial ribosome (mitoribosome), a dedicated translation machinery responsible for the synthesis of mitochondrial genome-encoded proteins, including at least some of the essential transmembrane subunits of the mitochondrial respiratory chain. The mitoribosomes are attached to the mitochondrial inner membrane and translation products are cotranslationally integrated into the membrane. The chain is Large ribosomal subunit protein mL59 (MRPL25) from Saccharomyces cerevisiae (strain ATCC 204508 / S288c) (Baker's yeast).